The chain runs to 400 residues: ATP-dependent RNA helicase fal-1 (400 aa).

The Q motif motif lies at 26–54; the sequence is PTFESMSLKESLLRGIYAYGYESPSAVQS. The Helicase ATP-binding domain occupies 57–227; the sequence is IVQICKGRDT…TKFMTDPVRI (171 aa). 70 to 77 contacts ATP; it reads AQSGTGKT. The short motif at 175–178 is the DEAD box element; it reads DEAD. A Helicase C-terminal domain is found at 238 to 399; the sequence is GLKQYFIAVE…EMPMNVADLI (162 aa).

The protein belongs to the DEAD box helicase family. DDX48/FAL1 subfamily.

The protein resides in the nucleus. The protein localises to the nucleolus. The enzyme catalyses ATP + H2O = ADP + phosphate + H(+). Its function is as follows. ATP-dependent RNA helicase involved in 40S ribosomal subunit biogenesis. Required for the processing and cleavage of 35S pre-rRNA at sites A0, A1, and A2, leading to mature 18S rRNA. The sequence is that of ATP-dependent RNA helicase fal-1 (fal-1) from Neurospora crassa (strain ATCC 24698 / 74-OR23-1A / CBS 708.71 / DSM 1257 / FGSC 987).